The following is a 461-amino-acid chain: Probable multidrug resistance protein NorM (461 aa).

12 consecutive transmembrane segments (helical) span residues 17–37 (FLKL…TGFV), 51–71 (AAGG…VGLI), 98–118 (LWIV…LNGV), 138–158 (VMAW…CIIA), 165–185 (IMLI…GLGF), 198–218 (LAIA…VYML), 243–263 (LLWV…LYLT), 275–295 (ILAA…VPLA), 320–340 (ALVS…ALLA), 360–380 (ALNV…LDGL), 398–418 (MVLG…LLGF), and 424–444 (GAGV…AYLW).

Belongs to the multi antimicrobial extrusion (MATE) (TC 2.A.66.1) family.

The protein resides in the cell inner membrane. In terms of biological role, multidrug efflux pump. This is Probable multidrug resistance protein NorM (norM) from Synechocystis sp. (strain ATCC 27184 / PCC 6803 / Kazusa).